Consider the following 254-residue polypeptide: NADPH-dependent ferric-chelate reductase (254 aa).

The FAD-binding FR-type domain occupies 15–136; the sequence is LRFRELTVLR…AGPRGSLVVP (122 aa).

This sequence belongs to the SIP oxidoreductase family.

It localises to the cytoplasm. The catalysed reaction is 2 a Fe(II)-siderophore + NADP(+) + H(+) = 2 a Fe(III)-siderophore + NADPH. In terms of biological role, plays a role in iron homeostasis under excess nickel conditions. This Escherichia coli (strain K12) protein is NADPH-dependent ferric-chelate reductase (yqjH).